The primary structure comprises 372 residues: GPN-loop GTPase 1 (372 aa).

A2 bears the N-acetylalanine mark. 29–34 (GSGKTT) is a GTP binding site. The Gly-Pro-Asn (GPN)-loop; involved in dimer interface motif lies at 86 to 88 (GPN). 189 to 192 (NKTD) is a GTP binding site. Residues S301 and S314 each carry the phosphoserine modification. The segment at 303 to 372 (ALDPEAGKGN…ESMAHWKRNK (70 aa)) is disordered. T328 carries the phosphothreonine modification. Residues 330–342 (DEEDEEADSDTDD) show a composition bias toward acidic residues. S338 bears the Phosphoserine mark. Phosphothreonine is present on T340. The segment covering 343–355 (IDHRVTEESREEP) has biased composition (basic and acidic residues).

It belongs to the GPN-loop GTPase family. Heterodimer with GPN3. Binds to RNA polymerase II (RNAPII). Interacts directly with RNAPII subunits RPB4 and RPB7 and the CTD of RPB1. Interacts with XPA.

It is found in the cytoplasm. The protein localises to the nucleus. Functionally, small GTPase required for proper nuclear import of RNA polymerase II (RNAPII). May act at an RNAP assembly step prior to nuclear import. Forms an interface between the RNA polymerase II enzyme and chaperone/scaffolding proteins, suggesting that it is required to connect RNA polymerase II to regulators of protein complex formation. May be involved in nuclear localization of XPA. This Mus musculus (Mouse) protein is GPN-loop GTPase 1.